A 351-amino-acid chain; its full sequence is Flap endonuclease 1 (351 aa).

Residues 1-98 (MDLAELVEEI…QELERRKKVK (98 aa)) form an N-domain region. 7 residues coordinate Mg(2+): aspartate 27, aspartate 80, glutamate 154, glutamate 156, aspartate 175, aspartate 177, and aspartate 238. An I-domain region spans residues 118–260 (ELKKYAQMSI…TAYRIIKKYG (143 aa)). The interaction with PCNA stretch occupies residues 343–351 (RQTGLDQWF).

Belongs to the XPG/RAD2 endonuclease family. FEN1 subfamily. In terms of assembly, interacts with PCNA. PCNA stimulates the nuclease activity without altering cleavage specificity. It depends on Mg(2+) as a cofactor.

Its function is as follows. Structure-specific nuclease with 5'-flap endonuclease and 5'-3' exonuclease activities involved in DNA replication and repair. During DNA replication, cleaves the 5'-overhanging flap structure that is generated by displacement synthesis when DNA polymerase encounters the 5'-end of a downstream Okazaki fragment. Binds the unpaired 3'-DNA end and kinks the DNA to facilitate 5' cleavage specificity. Cleaves one nucleotide into the double-stranded DNA from the junction in flap DNA, leaving a nick for ligation. Also involved in the base excision repair (BER) pathway. Acts as a genome stabilization factor that prevents flaps from equilibrating into structures that lead to duplications and deletions. Also possesses 5'-3' exonuclease activity on nicked or gapped double-stranded DNA. The sequence is that of Flap endonuclease 1 from Sulfurisphaera tokodaii (strain DSM 16993 / JCM 10545 / NBRC 100140 / 7) (Sulfolobus tokodaii).